The chain runs to 740 residues: MLKLFSAFRKNKIWDFNGGIHPPEMKTQSNGTPLRQVPLAQRFVIPLKQHIGAEGELCVSVGDKVLRGQPLTRGRGKMLPVHAPTSGTVTAIAPHSTAHPSALAELSVIIDADGEDCWIPRDGWADYRSRRREELIERIHQFGVAGLGGAGFPTGVKLQGGGDKIETLIINAAECEPYITADDRLMQDCAAQVVEGIRILAHILQPREILIGIEDNKPQAISMLRAVLADSHDISMRVIPTKYPSGGAKQLTYILTGKQVPHGGRSSDIGVLMQNVGTAYAVKRAVIDGEPITERVVTLTGEAIARPGNVWARLGTPVRHLLNDAGFCPSADQMVIMGGPLMGFTLPWLDVPVVKITNCLLAPSANELGEPQEEQSCIRCSACADACPADLLPQQLYWFSKGQQHDKATTHNIADCIECGACAWVCPSNIPLVQYFRQEKAEIAAIRQEEKRAAEAKARFEARLARLEREKAARLERHKSAAVQPAAKDKDAIAAALARVKEKQAQATQPIVIKAGERPDNSAIIAAREARKAQARAKQAELQQTNDAATVTDPRKTAVEAAIARAKARKLEQQQANAEPEQQVDPRKAAVEAAIARAKARKLEQQQANAEPEQQVDPRKAAVEAAIARAKARKLEQQQANAEPEEPVDPRKAAVEAAITRAKARKLEQQQANAEPEEQVDPRKAAVAAAIARAKARKLEQQQANAEPEEQVDPRKAAVAAAIARVQAKKAVQQKVVNED.

4Fe-4S ferredoxin-type domains follow at residues 369–397 and 407–436; these read GEPQ…QQLY and KATT…VQYF. Residues Cys-377, Cys-380, Cys-383, Cys-387, Cys-416, Cys-419, Cys-422, and Cys-426 each coordinate [4Fe-4S] cluster. 3 disordered regions span residues 602-652, 664-685, and 695-714; these read KLEQ…DPRK, ARKL…PRKA, and KARK…QVDP. Positions 605 to 615 are enriched in low complexity; it reads QQQANAEPEQQ.

This sequence belongs to the 4Fe4S bacterial-type ferredoxin family. RnfC subfamily. In terms of assembly, the complex is composed of six subunits: RsxA, RsxB, RsxC, RsxD, RsxE and RsxG. The cofactor is [4Fe-4S] cluster.

The protein resides in the cell inner membrane. In terms of biological role, part of a membrane-bound complex that couples electron transfer with translocation of ions across the membrane. Required to maintain the reduced state of SoxR. This Escherichia coli O157:H7 protein is Ion-translocating oxidoreductase complex subunit C.